Here is a 310-residue protein sequence, read N- to C-terminus: Aspartate carbamoyltransferase catalytic subunit (310 aa).

Carbamoyl phosphate is bound by residues Arg-55 and Thr-56. Lys-83 provides a ligand contact to L-aspartate. Positions 105, 133, and 136 each coordinate carbamoyl phosphate. Residues Arg-166 and Arg-220 each coordinate L-aspartate. Residues Gly-261 and Pro-262 each contribute to the carbamoyl phosphate site.

Belongs to the aspartate/ornithine carbamoyltransferase superfamily. ATCase family. In terms of assembly, heterododecamer (2C3:3R2) of six catalytic PyrB chains organized as two trimers (C3), and six regulatory PyrI chains organized as three dimers (R2).

The enzyme catalyses carbamoyl phosphate + L-aspartate = N-carbamoyl-L-aspartate + phosphate + H(+). It functions in the pathway pyrimidine metabolism; UMP biosynthesis via de novo pathway; (S)-dihydroorotate from bicarbonate: step 2/3. Its function is as follows. Catalyzes the condensation of carbamoyl phosphate and aspartate to form carbamoyl aspartate and inorganic phosphate, the committed step in the de novo pyrimidine nucleotide biosynthesis pathway. This is Aspartate carbamoyltransferase catalytic subunit from Chlorobium phaeovibrioides (strain DSM 265 / 1930) (Prosthecochloris vibrioformis (strain DSM 265)).